Consider the following 234-residue polypeptide: GTP-binding protein YPT52 (234 aa).

Residues 10–17 (GDSSVGKS), 66–70 (DTAGQ), and 111–114 (NKVG) contribute to the GTP site. Disordered stretches follow at residues 131-151 (QETP…EEQK) and 206-234 (NRQI…SCCS). Positions 132-142 (ETPSTETSPDS) are enriched in polar residues. Phosphoserine is present on residues S139 and S142. K151 is covalently cross-linked (Glycyl lysine isopeptide (Lys-Gly) (interchain with G-Cter in ubiquitin)). Polar residues predominate over residues 217 to 234 (VDINLQRPSTNDPTSCCS). 2 S-geranylgeranyl cysteine lipidation sites follow: C232 and C233.

Belongs to the small GTPase superfamily. Rab family. Interacts with ROY1, YIF1, YIP3, YIP4 and YIP5.

It is found in the cell membrane. The protein localises to the endoplasmic reticulum. In terms of biological role, required for transport in the endocytic pathway and for correct sorting of the vacuolar hydrolases suggesting a possible intersection of the endocytic with the vacuolar sorting pathway. May be involved in recruiting the MON1-CCZ1 complex to membranes enriched in phosphatidylinositol 3-phosphate (PtdIns[3]P) or other charged lipids, leading to recruitment of YPT7. In Saccharomyces cerevisiae (strain ATCC 204508 / S288c) (Baker's yeast), this protein is GTP-binding protein YPT52 (YPT52).